The primary structure comprises 37 residues: MKVRASVKRICNNCKIIKRHGVVRVICKEPRHKQRQG.

It belongs to the bacterial ribosomal protein bL36 family.

The polypeptide is Large ribosomal subunit protein bL36 (Vesicomyosocius okutanii subsp. Calyptogena okutanii (strain HA)).